The sequence spans 73 residues: Mu-sparatoxin-Hv2 (73 aa).

Residues 1-20 (MKFAIVITLLLVAFSAVALA) form the signal peptide. A propeptide spanning residues 21–35 (DKSIERAVMDLITAR) is cleaved from the precursor. Cystine bridges form between cysteine 39–cysteine 53, cysteine 46–cysteine 58, and cysteine 52–cysteine 68. Phenylalanine 72 is subject to Phenylalanine amide.

Belongs to the neurotoxin 10 (Hwtx-1) family. In terms of tissue distribution, expressed by the venom gland.

The protein localises to the secreted. In terms of biological role, insecticidal toxin that potently and irreversibly blocks voltage-gated sodium channels (Nav) in cockroach dorsal unpaired median (DUM) neurons (IC(50)=833.7 nM). It does not change both the steady-state activation and inactivation curves, suggesting it acts as a pore blocker (possibly at Nav site 1). Does not show toxicity when intraperitoneally injected into mouse. This chain is Mu-sparatoxin-Hv2, found in Heteropoda venatoria (Brown huntsman spider).